An 83-amino-acid polypeptide reads, in one-letter code: DNA-directed RNA polymerase subunit Rpo5 (83 aa).

It belongs to the archaeal Rpo5/eukaryotic RPB5 RNA polymerase subunit family. In terms of assembly, part of the RNA polymerase complex.

The protein resides in the cytoplasm. The enzyme catalyses RNA(n) + a ribonucleoside 5'-triphosphate = RNA(n+1) + diphosphate. In terms of biological role, DNA-dependent RNA polymerase (RNAP) catalyzes the transcription of DNA into RNA using the four ribonucleoside triphosphates as substrates. The polypeptide is DNA-directed RNA polymerase subunit Rpo5 (Metallosphaera sedula (strain ATCC 51363 / DSM 5348 / JCM 9185 / NBRC 15509 / TH2)).